A 159-amino-acid chain; its full sequence is Gigasin-1 (159 aa).

2 disordered regions span residues 1-33 (GKATTKKVEIPERDRYDNGYDNHGHDDFEHDQT) and 80-159 (KESY…KYRR).

Component of the organic matrix of calcified shell layers.

In Magallana gigas (Pacific oyster), this protein is Gigasin-1.